A 398-amino-acid polypeptide reads, in one-letter code: Dual-specificity RNA methyltransferase RlmN (398 aa).

E119 acts as the Proton acceptor in catalysis. Residues E125–D364 enclose the Radical SAM core domain. C132 and C369 are disulfide-bonded. [4Fe-4S] cluster contacts are provided by C139, C143, and C146. S-adenosyl-L-methionine-binding positions include G193–E194, S225, S247–H249, and N326. C369 functions as the S-methylcysteine intermediate in the catalytic mechanism.

This sequence belongs to the radical SAM superfamily. RlmN family. [4Fe-4S] cluster serves as cofactor.

It localises to the cytoplasm. It catalyses the reaction adenosine(2503) in 23S rRNA + 2 reduced [2Fe-2S]-[ferredoxin] + 2 S-adenosyl-L-methionine = 2-methyladenosine(2503) in 23S rRNA + 5'-deoxyadenosine + L-methionine + 2 oxidized [2Fe-2S]-[ferredoxin] + S-adenosyl-L-homocysteine. The enzyme catalyses adenosine(37) in tRNA + 2 reduced [2Fe-2S]-[ferredoxin] + 2 S-adenosyl-L-methionine = 2-methyladenosine(37) in tRNA + 5'-deoxyadenosine + L-methionine + 2 oxidized [2Fe-2S]-[ferredoxin] + S-adenosyl-L-homocysteine. In terms of biological role, specifically methylates position 2 of adenine 2503 in 23S rRNA and position 2 of adenine 37 in tRNAs. m2A2503 modification seems to play a crucial role in the proofreading step occurring at the peptidyl transferase center and thus would serve to optimize ribosomal fidelity. This chain is Dual-specificity RNA methyltransferase RlmN, found in Pectobacterium atrosepticum (strain SCRI 1043 / ATCC BAA-672) (Erwinia carotovora subsp. atroseptica).